Reading from the N-terminus, the 714-residue chain is MKLISSLDGSKTLNANNMETLIECQSEGDIKVPPLLTSCESEDSICQLTEIKKRKKVLSWPSLMRKLSPSSDFSGSLEPELKVSLFDQPLSIICGENDTLPRPIQDILTILCLKGPSTEGIFRKAASEKARKELKEGLNCGVSVNLKQLPVHLLAVVFKDFLRGIPLKLLSCDLFEDWMGALEKPTEEDRIEALKQVAGGLPRPNLLLLRHLLYVLHLISKNAEVNKMDSSNLAICIGPNMLTLKNDQSLSFQAQKDLNNKVKILVEFLIDNCFEIFGENIRTRSRITSDDSLEHTDSSDVSTLQNDSAYDSNDPDVEPTSGAASPNRQLEGPTPTMAGLDTRGQRDTCESSSESSVSMVVRLKSSIVQQDRRFSEPNMSPSRECLVGPTSKQKLARSEDSFTLSQDASCSEGDEAEDPFTEEVFPAVDSKPKRPVDLKIKNWTQGLASPQGHITKAFSRSSPGESLGSSPVPSPSCPKRNFFTRHQSFTTKTDKTKPQREIRKHSMSFSFASHKKVLPRTSSIGSEKSKDFSRDQLQKDLRKESQLSGRIVQENESEIQSQTSLGFSLSGTWALSVDNTFQLVDMRKPGSPPSYEEAIYYQTSGLTAYGGQTVGSMRSRMFKPSTAVPPVPSHHGGDLSEGTPGGHRLSSVTEHWTHSQTVHVSIETQGRSELHQLRTVSESMQKAKLDCLGPQHSHLVFEADQLCCARESYI.

Positions 88–277 constitute a Rho-GAP domain; sequence QPLSIICGEN…FLIDNCFEIF (190 aa). Disordered regions lie at residues 290–357, 370–419, 451–508, 520–563, and 623–650; these read DDSL…ESSV, QDRR…AEDP, QGHI…HSMS, RTSS…QSQT, and KPST…HRLS. Residues 299–311 show a composition bias toward polar residues; the sequence is SDVSTLQNDSAYD. Serine 398 is modified (phosphoserine). Residues 459–471 are compositionally biased toward low complexity; that stretch reads SRSSPGESLGSSP. Basic and acidic residues-rich tracts occupy residues 492–501 and 527–545; these read KTDKTKPQRE and EKSK…RKES.

Highly expressed in testis.

In terms of biological role, may function as a GTPase-activating protein. May play a role in transmission ratio distortion (TRD) in mouse, in which heterozygous males for t-locus transmit their t-carrying chromosome to 95% or more of their offspring. The chain is T-cell activation Rho GTPase-activating protein (Tagap) from Mus musculus (Mouse).